The following is a 330-amino-acid chain: Protein qutG (330 aa).

Mg(2+) contacts are provided by Glu78, Asp100, Leu102, Asp103, and Asp251. Position 78 (Glu78) interacts with substrate. Residues 102-105 (LDGT) and Asp251 each bind substrate.

The protein belongs to the inositol monophosphatase superfamily.

In terms of biological role, not known. Probably involved in quinate metabolism. This is Protein qutG (qutG) from Emericella nidulans (strain FGSC A4 / ATCC 38163 / CBS 112.46 / NRRL 194 / M139) (Aspergillus nidulans).